The following is a 383-amino-acid chain: Probable tRNA sulfurtransferase (383 aa).

The 101-residue stretch at 58–158 (NEIIHILKMI…ENKSYVWFDK (101 aa)) folds into the THUMP domain. ATP is bound by residues 176–177 (LL), 201–202 (TF), R259, G281, and Q290.

Belongs to the ThiI family.

It is found in the cytoplasm. The enzyme catalyses [ThiI sulfur-carrier protein]-S-sulfanyl-L-cysteine + a uridine in tRNA + 2 reduced [2Fe-2S]-[ferredoxin] + ATP + H(+) = [ThiI sulfur-carrier protein]-L-cysteine + a 4-thiouridine in tRNA + 2 oxidized [2Fe-2S]-[ferredoxin] + AMP + diphosphate. The catalysed reaction is [ThiS sulfur-carrier protein]-C-terminal Gly-Gly-AMP + S-sulfanyl-L-cysteinyl-[cysteine desulfurase] + AH2 = [ThiS sulfur-carrier protein]-C-terminal-Gly-aminoethanethioate + L-cysteinyl-[cysteine desulfurase] + A + AMP + 2 H(+). It participates in cofactor biosynthesis; thiamine diphosphate biosynthesis. Catalyzes the ATP-dependent transfer of a sulfur to tRNA to produce 4-thiouridine in position 8 of tRNAs, which functions as a near-UV photosensor. Also catalyzes the transfer of sulfur to the sulfur carrier protein ThiS, forming ThiS-thiocarboxylate. This is a step in the synthesis of thiazole, in the thiamine biosynthesis pathway. The sulfur is donated as persulfide by IscS. This chain is Probable tRNA sulfurtransferase, found in Malacoplasma penetrans (strain HF-2) (Mycoplasma penetrans).